Here is a 432-residue protein sequence, read N- to C-terminus: MNKVIVTGAQWGDEGKGRIVDLLAEAADCVVRFNGGHNAGHTLVVGGKTWKLALLPCGLLRGKLGVIGNGVVVDPQALLAEIDRIAAEGLAITPDTLAIADNATLLLPSHIALDAAQEAARAQAIGTTGRGIGPAFEDRAGRRAIRLADLADPAVLRERLAEALRYHNAVLAALGRPACELEPMLAALLEQARRILPYLRPAWKLLSEADEAGRRILFEGAQAMLLDVEHGTYPFVTSSGTGPAQAASGSGLGSAARGHALGVCKAYATRVGGGPFPTELDDAVGARLREKGGEYGTNTGRPRRCGWLDAALLRQSVRVGGMSSLALTKLDVLDGLDELRICTGYRVDGVLRDDYPAGLAERGRVAPVYETLPGWQESTRGARSLDALPEAARAYVRRIAELAGAPVSLISTGAERDDVIRLADPWMPASGG.

GTP contacts are provided by residues Gly12 to Arg18 and Gly40 to Thr42. The active-site Proton acceptor is Asp13. Residues Asp13 and Gly40 each contribute to the Mg(2+) site. Residues Asp13 to Lys16, Asn38 to His41, Thr128, Arg142, Gln222, Thr237, and Arg301 contribute to the IMP site. The Proton donor role is filled by His41. A substrate-binding site is contributed by Thr297–Arg303. Residues Arg303, Lys329–Asp331, and Ser411–Gly413 each bind GTP.

This sequence belongs to the adenylosuccinate synthetase family. Homodimer. Requires Mg(2+) as cofactor.

The protein resides in the cytoplasm. It catalyses the reaction IMP + L-aspartate + GTP = N(6)-(1,2-dicarboxyethyl)-AMP + GDP + phosphate + 2 H(+). Its pathway is purine metabolism; AMP biosynthesis via de novo pathway; AMP from IMP: step 1/2. Plays an important role in the de novo pathway of purine nucleotide biosynthesis. Catalyzes the first committed step in the biosynthesis of AMP from IMP. The protein is Adenylosuccinate synthetase 1 of Chromobacterium violaceum (strain ATCC 12472 / DSM 30191 / JCM 1249 / CCUG 213 / NBRC 12614 / NCIMB 9131 / NCTC 9757 / MK).